The following is a 640-amino-acid chain: Threonine--tRNA ligase (640 aa).

The TGS domain occupies 1–59 (MKIKVKLPDGKEKEYDRGITPAEIAKELGVKKAIGAVVNGELWDLKRPIENDCELRLVT). The tract at residues 240-531 (DHRKLGPHLE…LIEHFAGAFP (292 aa)) is catalytic. Zn(2+) is bound by residues C332, H383, and H508.

The protein belongs to the class-II aminoacyl-tRNA synthetase family. In terms of assembly, homodimer. The cofactor is Zn(2+).

It is found in the cytoplasm. The catalysed reaction is tRNA(Thr) + L-threonine + ATP = L-threonyl-tRNA(Thr) + AMP + diphosphate + H(+). In terms of biological role, catalyzes the attachment of threonine to tRNA(Thr) in a two-step reaction: L-threonine is first activated by ATP to form Thr-AMP and then transferred to the acceptor end of tRNA(Thr). Also edits incorrectly charged L-seryl-tRNA(Thr). The protein is Threonine--tRNA ligase of Thermotoga petrophila (strain ATCC BAA-488 / DSM 13995 / JCM 10881 / RKU-1).